Here is a 231-residue protein sequence, read N- to C-terminus: 2,3-bisphosphoglycerate-dependent phosphoglycerate mutase (231 aa).

Substrate is bound by residues Arg10–Asn17, Thr23–Gly24, Arg62, Glu89–Tyr92, Lys100, Arg116–Arg117, and Gly185–Asn186. His11 (tele-phosphohistidine intermediate) is an active-site residue. Glu89 (proton donor/acceptor) is an active-site residue.

This sequence belongs to the phosphoglycerate mutase family. BPG-dependent PGAM subfamily. As to quaternary structure, homodimer.

The enzyme catalyses (2R)-2-phosphoglycerate = (2R)-3-phosphoglycerate. It functions in the pathway carbohydrate degradation; glycolysis; pyruvate from D-glyceraldehyde 3-phosphate: step 3/5. Catalyzes the interconversion of 2-phosphoglycerate and 3-phosphoglycerate. The sequence is that of 2,3-bisphosphoglycerate-dependent phosphoglycerate mutase from Buchnera aphidicola subsp. Acyrthosiphon pisum (strain 5A).